Reading from the N-terminus, the 368-residue chain is Chaperone protein DnaJ (368 aa).

A J domain is found at 5-75 (DFYKILGVEK…TKRKQYDKFG (71 aa)). Residues 139 to 222 (GKEISQKLTK…CRGKTIVETK (84 aa)) form a CR-type zinc finger. Cys-152, Cys-155, Cys-169, Cys-172, Cys-196, Cys-199, Cys-210, and Cys-213 together coordinate Zn(2+). 4 CXXCXGXG motif repeats span residues 152–159 (CDNCKGSG), 169–176 (CYNCQGRG), 196–203 (CSVCLGSG), and 210–217 (CKKCRGKT).

The protein belongs to the DnaJ family. Homodimer. It depends on Zn(2+) as a cofactor.

Its subcellular location is the cytoplasm. Participates actively in the response to hyperosmotic and heat shock by preventing the aggregation of stress-denatured proteins and by disaggregating proteins, also in an autonomous, DnaK-independent fashion. Unfolded proteins bind initially to DnaJ; upon interaction with the DnaJ-bound protein, DnaK hydrolyzes its bound ATP, resulting in the formation of a stable complex. GrpE releases ADP from DnaK; ATP binding to DnaK triggers the release of the substrate protein, thus completing the reaction cycle. Several rounds of ATP-dependent interactions between DnaJ, DnaK and GrpE are required for fully efficient folding. Also involved, together with DnaK and GrpE, in the DNA replication of plasmids through activation of initiation proteins. This is Chaperone protein DnaJ from Mesomycoplasma hyopneumoniae (strain 232) (Mycoplasma hyopneumoniae).